We begin with the raw amino-acid sequence, 149 residues long: Calmodulin (149 aa).

A2 carries the post-translational modification N-acetylalanine. EF-hand domains lie at 8 to 43 (EQIAEFKEAFSLFDKDGDGTITTKELGTVMRSLGQN), 44 to 79 (PTEAELQDMINEVDADGNGTIDFPEFLTMMARKMKD), 81 to 116 (DSEEEIREAFRVFDKDGNGYISAAELRYVMTNLGEK), and 117 to 149 (LTDEXVDEMIREADIDGDGQVNYEEFVQMMTAK). Ca(2+) contacts are provided by D21, D23, D25, T27, E32, D57, D59, N61, T63, E68, D94, D96, N98, Y100, and E105. K116 is modified (N6,N6,N6-trimethyllysine). Ca(2+)-binding residues include D130, D132, D134, Q136, and E141.

It belongs to the calmodulin family.

Functionally, calmodulin acts as part of a calcium signal transduction pathway by mediating the control of a large number of enzymes, ion channels, aquaporins and other proteins through calcium-binding. Calcium-binding is required for the activation of calmodulin. Among the enzymes to be stimulated by the calmodulin-calcium complex are a number of protein kinases, such as myosin light-chain kinases and calmodulin-dependent protein kinase type II (CaMK2), and phosphatases. The sequence is that of Calmodulin (calm) from Oreochromis mossambicus (Mozambique tilapia).